A 513-amino-acid polypeptide reads, in one-letter code: Pleiotropic regulator 1 (513 aa).

N-acetylmethionine is present on Met1. Positions 60-79 (TSKENLKEKGPQNATDSYPH) are disordered. Ser119 bears the Phosphoserine mark. Residues 136 to 160 (VDANRTGPAGSEYRHPGASDRSQPT) form a disordered region. Ser200 carries the phosphoserine modification. WD repeat units follow at residues 201 to 240 (GHLG…LKLS), 243 to 282 (GHIS…VIRH), 285 to 324 (GHLS…SVHT), 327 to 366 (GHTN…TRVT), 369 to 409 (NHKK…QNLS), 410 to 448 (GHNA…NFQR), and 459 to 498 (DSES…TEET). A Phosphoserine modification is found at Ser390.

The protein belongs to the WD repeat PRL1/PRL2 family. In terms of assembly, identified in the spliceosome C complex. Component of the PRP19-CDC5L splicing complex composed of a core complex comprising a homotetramer of PRPF19, CDC5L, PLRG1 and BCAS2, and at least three less stably associated proteins CTNNBL1, CWC15 and HSPA8. Interacts (via its WD40 repeat domain) directly with CDC5L (via its C-terminal); the interaction is required for mRNA splicing but not for spliceosome assembly. Component of the minor spliceosome, which splices U12-type introns. Within this complex, interacts with CRIPT. Also interacts directly in the complex with BCAS2 and PRPF19. Interacts with USB1.

It is found in the nucleus. The protein localises to the nucleus speckle. Its function is as follows. Involved in pre-mRNA splicing as component of the spliceosome. Component of the PRP19-CDC5L complex that forms an integral part of the spliceosome and is required for activating pre-mRNA splicing. As a component of the minor spliceosome, involved in the splicing of U12-type introns in pre-mRNAs. This Mus musculus (Mouse) protein is Pleiotropic regulator 1 (Plrg1).